The sequence spans 343 residues: Dehydrodolichyl diphosphate synthase complex subunit SRT1 (343 aa).

This sequence belongs to the UPP synthase family. As to quaternary structure, forms an active dehydrodolichyl diphosphate synthase complex with NUS1. Mg(2+) is required as a cofactor.

It is found in the lipid droplet. It catalyses the reaction n isopentenyl diphosphate + (2E,6E)-farnesyl diphosphate = a di-trans,poly-cis-polyprenyl diphosphate + n diphosphate. It functions in the pathway protein modification; protein glycosylation. Functionally, with NUS1, forms the dehydrodolichyl diphosphate synthase (DDS) complex, an essential component of the dolichol monophosphate (Dol-P) biosynthetic machinery. Adds multiple copies of isopentenyl pyrophosphate (IPP) to farnesyl pyrophosphate (FPP) to produce dehydrodolichyl diphosphate (Dedol-PP), a precursor of dolichol which is utilized as a sugar carrier in protein glycosylation in the endoplasmic reticulum (ER). The sequence is that of Dehydrodolichyl diphosphate synthase complex subunit SRT1 from Saccharomyces cerevisiae (strain ATCC 204508 / S288c) (Baker's yeast).